Consider the following 457-residue polypeptide: RNA-binding suppressor of PAS kinase protein 1 (457 aa).

The 63-residue stretch at 26–88 (RIFIIELENS…SCVILFKGEN (63 aa)) folds into the R3H domain. Disordered stretches follow at residues 142 to 181 (IDGN…IEKE), 195 to 291 (LNKS…NGGY), and 406 to 457 (FQGK…KLNI). A compositionally biased stretch (polar residues) spans 145–158 (NTRTPNSNLTANSN). Basic and acidic residues predominate over residues 159-181 (KDQKIEIDDKSSTDLEQERIEKE). Position 198 is a phosphoserine (S198). Over residues 226-247 (SNTQTSNGSVSSSSPFNSSVTT) the composition is skewed to low complexity. Residues 248–258 (IQVNKPQQQFY) show a composition bias toward polar residues. Basic and acidic residues predominate over residues 418–435 (KRSDDSNSNKNEGIRRAS). Phosphoserine occurs at positions 435, 439, and 447. Residues 443–457 (RDTDSVEMKFDKLNI) are compositionally biased toward basic and acidic residues.

It is found in the cytoplasm. In Saccharomyces cerevisiae (strain ATCC 204508 / S288c) (Baker's yeast), this protein is RNA-binding suppressor of PAS kinase protein 1 (RBS1).